The chain runs to 305 residues: Major pollen allergen Pha a 5.2 (305 aa).

Positions 1–25 (MAVQKYTVALFLAVALVAGPAALYA) are cleaved as a signal peptide. Over residues 65-85 (GLNEEKNAARQTDDEQKRSDE) the composition is skewed to basic and acidic residues. 2 disordered regions span residues 65-87 (GLNE…DEIN) and 279-299 (STAT…PAAV).

This sequence belongs to the Poa p IX/Phl p VI allergen family.

This is Major pollen allergen Pha a 5.2 from Phalaris aquatica (Canary grass).